The sequence spans 232 residues: Protein shisa-3 (232 aa).

The N-terminal stretch at 1–19 is a signal peptide; it reads MRLLGCFFLIFLTWGSARA. Residues 20-93 lie on the Lumenal side of the membrane; that stretch reads QGEYCHGWLD…GVSAQPVYVP (74 aa). The helical transmembrane segment at 94 to 114 threads the bilayer; it reads FLIVGSIFIAFIIVGSLVAVY. The Cytoplasmic portion of the chain corresponds to 115–232; the sequence is CCTCLRPKQT…NKSCPDFRQS (118 aa). A disordered region spans residues 146 to 185; it reads TSGNLRTPSRQSSTATSSTSTGGSVRRLSSSRADPGYLVS. Over residues 151 to 177 the composition is skewed to low complexity; sequence RTPSRQSSTATSSTSTGGSVRRLSSSR.

The protein belongs to the shisa family. In terms of assembly, interacts with fzd8 and fgfr1.

It localises to the endoplasmic reticulum membrane. Plays an essential role in the maturation of presomitic mesoderm cells by individual attenuation of both fgf and wnt signaling. Regulates head and somite developmen. Inhibits both wnt and fgf signaling through the regulation of protein maturation and cell surface transportation of their receptors within the endoplasmic reticulum. The chain is Protein shisa-3 (shisa3) from Xenopus laevis (African clawed frog).